The primary structure comprises 747 residues: Eukaryotic translation initiation factor 3 subunit B (747 aa).

Residues 42–128 enclose the RRM domain; that stretch reads AFVVVDGLPE…HTLRVNKLTD (87 aa). 5 WD repeats span residues 195-234, 236-292, 310-349, 520-563, and 578-623; these read DRQH…RQRR, AHPF…PLRS, APKF…LLDK, LEKK…EKPE, and ADHY…LREE.

This sequence belongs to the eIF-3 subunit B family. As to quaternary structure, component of the eukaryotic translation initiation factor 3 (eIF-3) complex.

Its subcellular location is the cytoplasm. In terms of biological role, RNA-binding component of the eukaryotic translation initiation factor 3 (eIF-3) complex, which is involved in protein synthesis of a specialized repertoire of mRNAs and, together with other initiation factors, stimulates binding of mRNA and methionyl-tRNAi to the 40S ribosome. The eIF-3 complex specifically targets and initiates translation of a subset of mRNAs involved in cell proliferation. In Neurospora crassa (strain ATCC 24698 / 74-OR23-1A / CBS 708.71 / DSM 1257 / FGSC 987), this protein is Eukaryotic translation initiation factor 3 subunit B (prt-1).